The chain runs to 293 residues: Ribosomal protein L11 methyltransferase (293 aa).

S-adenosyl-L-methionine contacts are provided by T145, G166, D188, and N230.

Belongs to the methyltransferase superfamily. PrmA family.

It localises to the cytoplasm. The enzyme catalyses L-lysyl-[protein] + 3 S-adenosyl-L-methionine = N(6),N(6),N(6)-trimethyl-L-lysyl-[protein] + 3 S-adenosyl-L-homocysteine + 3 H(+). Methylates ribosomal protein L11. The protein is Ribosomal protein L11 methyltransferase of Shewanella frigidimarina (strain NCIMB 400).